A 234-amino-acid chain; its full sequence is Large ribosomal subunit protein uL1 (234 aa).

Belongs to the universal ribosomal protein uL1 family. As to quaternary structure, part of the 50S ribosomal subunit.

Binds directly to 23S rRNA. The L1 stalk is quite mobile in the ribosome, and is involved in E site tRNA release. Functionally, protein L1 is also a translational repressor protein, it controls the translation of the L11 operon by binding to its mRNA. This chain is Large ribosomal subunit protein uL1, found in Salmonella agona (strain SL483).